The chain runs to 213 residues: Probable GTP-binding protein EngB (213 aa).

The EngB-type G domain maps to 30–204; it reads SVQSIAFMGR…REFILETLGI (175 aa). GTP is bound by residues 38–45, 65–69, 83–86, 150–153, and 183–185; these read GRSNSGKS, GKTKL, DLPG, TKID, and ISA. 2 residues coordinate Mg(2+): S45 and T67.

It belongs to the TRAFAC class TrmE-Era-EngA-EngB-Septin-like GTPase superfamily. EngB GTPase family. Requires Mg(2+) as cofactor.

Functionally, necessary for normal cell division and for the maintenance of normal septation. In Leptospira biflexa serovar Patoc (strain Patoc 1 / Ames), this protein is Probable GTP-binding protein EngB.